The primary structure comprises 379 residues: Armadillo repeat-containing X-linked protein 3 (379 aa).

At 1–6 (MGYARK) the chain is on the mitochondrial intermembrane side. 2 mitochondrion outer membrane (MOM)-targeting sequence regions span residues 1 to 6 (MGYARK) and 26 to 37 (RLTRGRKQNKEK). Residues 7 to 29 (VGWVTAGLVIGAGACYCIYRLTR) form a helical; Signal-anchor membrane-spanning segment. Over 30-379 (GRKQNKEKMA…TERMFPKSQE (350 aa)) the chain is Cytoplasmic. A phosphoserine mark is found at serine 61, serine 67, and serine 72. The segment at 89-98 (RARARARARA) is nuclear localization signal. Over residues 95–106 (RARATRARRAVQ) the composition is skewed to basic residues. Residues 95-116 (RARATRARRAVQKRASPNSDDT) are disordered. Phosphoserine is present on serine 110. 3 ARM repeats span residues 111-151 (PNSD…NNAA), 153-192 (AFNR…NLSV), and 233-272 (VTNE…NLAE).

This sequence belongs to the eutherian X-chromosome-specific Armcx family. As to quaternary structure, interacts (via ARM domain) with MIRO1, MIRO2 and TRAK2. The interaction with Miro is calcium-dependent. Interacts with Sox10. As to expression, highly expressed in the developing neural tissues, neural crest derivatives and hind limbs. Also widely expressed in the adult nervous tissue, especially in the forebrain, including the cerebral cortex, hippocampus and thalamus.

Its subcellular location is the mitochondrion outer membrane. The protein localises to the cytoplasm. The protein resides in the nucleus. Its function is as follows. Regulates mitochondrial aggregation and transport in axons in living neurons. May link mitochondria to the Trak2-kinesin motor complex via its interaction with Miro and Trak2. Mitochondrial distribution and dynamics is regulated through Armcx3 protein degradation, which is promoted by PCK and negatively regulated by Wnt1. Enhances the Sox10-mediated transactivation of the neuronal acetylcholine receptor subunit alpha-3 and beta-4 subunit gene promoters. In Mus musculus (Mouse), this protein is Armadillo repeat-containing X-linked protein 3 (Armcx3).